The primary structure comprises 396 residues: MTAVQQITVLGATGSIGLSTLDVIARHPDRYQVFALTGFTRLAELLALCVKHEPRFAVVPEAAAASRLQQDLRGAGLATQVLVGEQGLCEVASAPEVDAVMAAIVGAAGLRPTLAAVEAGKKILLANKEALVMSGALFMQAVGKSGSVLLPIDSEHNAIFQCMPADFSRGLSRVGVRRILLTASGGPFRQTPLEELEHVSPEQACAHPNWSMGRKISVDSASMMNKGLELIEACWLFDARPSQVEVVVHPQSVIHSLVDYVDGSVLAQLGNPDMRTPIANALAWPERIDSGVAPLDLFAIARLDFQAPDEQRFPCLRLARQAAEAGNSAPAMLNAANEVAVSAFLERRIRYPEIASIIDEVLTREPVVAVNELDAVFAADARARVLAQQWLQRNGR.

NADPH is bound by residues threonine 13, glycine 14, serine 15, isoleucine 16, and asparagine 127. 1-deoxy-D-xylulose 5-phosphate is bound at residue lysine 128. Glutamate 129 lines the NADPH pocket. Aspartate 153 lines the Mn(2+) pocket. The 1-deoxy-D-xylulose 5-phosphate site is built by serine 154, glutamate 155, serine 184, and histidine 207. Glutamate 155 lines the Mn(2+) pocket. Glycine 213 provides a ligand contact to NADPH. 1-deoxy-D-xylulose 5-phosphate is bound by residues serine 220, asparagine 225, lysine 226, and glutamate 229. Residue glutamate 229 coordinates Mn(2+).

This sequence belongs to the DXR family. Requires Mg(2+) as cofactor. Mn(2+) serves as cofactor.

The catalysed reaction is 2-C-methyl-D-erythritol 4-phosphate + NADP(+) = 1-deoxy-D-xylulose 5-phosphate + NADPH + H(+). The protein operates within isoprenoid biosynthesis; isopentenyl diphosphate biosynthesis via DXP pathway; isopentenyl diphosphate from 1-deoxy-D-xylulose 5-phosphate: step 1/6. In terms of biological role, catalyzes the NADPH-dependent rearrangement and reduction of 1-deoxy-D-xylulose-5-phosphate (DXP) to 2-C-methyl-D-erythritol 4-phosphate (MEP). The sequence is that of 1-deoxy-D-xylulose 5-phosphate reductoisomerase from Pseudomonas fluorescens (strain ATCC BAA-477 / NRRL B-23932 / Pf-5).